The following is a 510-amino-acid chain: Gallate 1-beta-glucosyltransferase (510 aa).

Catalysis depends on His19, which acts as the Proton acceptor. His19 is a binding site for an anthocyanidin. Residues Gln343, His358, Trp361, Asn362, Ser363, and Glu366 each coordinate UDP-alpha-D-glucose. Gly381 is an an anthocyanidin binding site. UDP-alpha-D-glucose is bound by residues Asp382 and Gln383.

The protein belongs to the UDP-glycosyltransferase family. In terms of tissue distribution, expressed in swelling buds and young leaves.

The catalysed reaction is 3,4,5-trihydroxybenzoate + UDP-alpha-D-glucose = 1-O-galloyl-beta-D-glucose + UDP. It carries out the reaction vanillate + UDP-alpha-D-glucose = 1-O-(4-hydroxy-3-methoxybenzoyl)-beta-D-glucose + UDP. It catalyses the reaction 3,4-dihydroxybenzoate + UDP-alpha-D-glucose = 1-O-(3,4-dihydroxy-benzoyl)-beta-D-glucose + UDP. Glucosyltransferase that catalyzes the formation of 1-O-beta-D-glucose esters with hydroxybenzoic acids as preferred glucosyl acceptors. Has the highest activity with 3,4-dihydroxybenzoate, vanillate and gallate in vitro. Gallate is the predicted native substrate of the enzyme, which thus catalyzes the formation of 1-O-galloyl-beta-D-glucose, the first committed step of gallotannin biosynthesis. This is Gallate 1-beta-glucosyltransferase from Quercus robur (English oak).